The chain runs to 344 residues: L-rhamnose-proton symporter (344 aa).

A run of 10 helical transmembrane segments spans residues 4 to 24 (AITM…CFYA), 38 to 58 (WSVG…ATLL), 72 to 92 (TLLP…NYGL), 101 to 121 (MGIG…TPII), 131 to 151 (TQGG…VGIV), 175 to 195 (LLLA…MNAA), 214 to 234 (LPSY…FCFI), 259 to 279 (LLLS…YAWG), 290 to 310 (MSWM…GLVL), and 323 to 343 (VLSL…LGMA).

It belongs to the L-rhamnose transporter (TC 2.A.7.6) family.

The protein resides in the cell inner membrane. It catalyses the reaction L-rhamnopyranose(in) + H(+)(in) = L-rhamnopyranose(out) + H(+)(out). Functionally, uptake of L-rhamnose across the cytoplasmic membrane with the concomitant transport of protons into the cell (symport system). This chain is L-rhamnose-proton symporter, found in Klebsiella pneumoniae (strain 342).